The chain runs to 241 residues: MALCCFAFSAPCLHLRSRRSCSSCFLRAKSAAFSSARFLRRAFSSSFLFKYSAICFSSSFSRSFFRFLFSSARRCRSRCVSPRGGAFPPGGPRRSRPRLSSSRDSKPSSTVSSSSLSFNSSSKDNSPSTNSSTSRSSGHGTGKHRNSPTDTKLTMLIISPLPRVWTESSFRIPSLRVWRLCTRRLVPHLWGTMFGPPTSSRPTGHLSRASDHLGPHRWTRYRLSSTVPYPSTPLLPHPENL.

Short sequence motifs (nuclear localization signal) lie at residues 73 to 78 (RRCRSR) and 91 to 98 (GPRRSRPR). The interval 86-153 (AFPPGGPRRS…HRNSPTDTKL (68 aa)) is disordered. Over residues 107–138 (PSSTVSSSSLSFNSSSKDNSPSTNSSTSRSSG) the composition is skewed to low complexity. The Mitochondrial targeting signal motif lies at 175 to 184 (LRVWRLCTRR).

This sequence belongs to the HTLV-1 accessory protein p30II family. As to quaternary structure, p30II binds to the KIX domains of CREBBP and EP300.

The protein resides in the host nucleus. The protein localises to the host nucleolus. Its subcellular location is the host mitochondrion inner membrane. In terms of biological role, p30II is a multifunctional regulator that sequesters EP300/CREBBP and down-regulates CREB-responsive element (CRE) and Tax-responsive element (TRE) mediated transcription. Specifically binds and represses tax/rex mRNA nuclear export. Since Tax and Rex are positive regulators of viral gene expression, their inhibition by p30II reduces virion production, and allows the virus to escape the host immune surveillance and persist latently in an immune-competent host. Its function is as follows. p13II increases mitochondrial permeability to monovalent cations, producing a rapid, membrane potential-dependent influx of potassium. This could involve a channel-forming activity. Interferes with cell proliferation and transformation and promotes apoptosis induced by ceramide and Fas ligand, probably using the Ras signaling. This chain is Accessory protein p30II, found in Human T-cell leukemia virus 1 (isolate Caribbea HS-35 subtype A) (HTLV-1).